Consider the following 491-residue polypeptide: Cobyric acid synthase (491 aa).

The GATase cobBQ-type domain maps to 250 to 439 (EVTIAVIRLP…LHGIFDNGAW (190 aa)). The Nucleophile role is filled by cysteine 331. Residue histidine 431 is part of the active site.

Belongs to the CobB/CobQ family. CobQ subfamily.

It functions in the pathway cofactor biosynthesis; adenosylcobalamin biosynthesis. Catalyzes amidations at positions B, D, E, and G on adenosylcobyrinic A,C-diamide. NH(2) groups are provided by glutamine, and one molecule of ATP is hydrogenolyzed for each amidation. The protein is Cobyric acid synthase of Synechococcus elongatus (strain ATCC 33912 / PCC 7942 / FACHB-805) (Anacystis nidulans R2).